The chain runs to 25 residues: Antimicrobial peptide THP3 (25 aa).

It localises to the secreted. Functionally, bactericidal activity; inhibits Staphylococcus aureus. This is Antimicrobial peptide THP3 from Meleagris gallopavo (Wild turkey).